Consider the following 288-residue polypeptide: CBY1-interacting BAR domain-containing protein 1 (288 aa).

A mitochondrion-targeting transit peptide spans 1–47; the sequence is MLRRSLENRDAQTRQLQDAVTNVEKHFGELCQIFAAYVRKTARLRDK. A BAR-like region spans residues 10–220; sequence DAQTRQLQDA…KIDEEEDLEV (211 aa). Positions 107-176 form a coiled coil; sequence KMKRDDLKAT…ETIDNFEKQK (70 aa). A disordered region spans residues 266 to 288; the sequence is RKDHQTEDDDEEDEDLDVTEEEN. Positions 271–288 are enriched in acidic residues; that stretch reads TEDDDEEDEDLDVTEEEN.

Belongs to the CIBAR family. Homodimer (via BAR-like domain). Heterodimer with FAM92B (via BAR-like domains). Interacts (via BAR-like domain) with CBY1; this interaction is required for targeting FAM92A to centriole and cilium basal body. Interacts (via BAR-like domain) with CBY3; both proteins form a ninefold symmetric structure at the flagellar base; are recruited to the annulus in a mutually dependent manner and regulate annulus positionning.

The protein localises to the cytoplasm. Its subcellular location is the cytoskeleton. It is found in the microtubule organizing center. The protein resides in the centrosome. It localises to the centriole. The protein localises to the cilium basal body. Its subcellular location is the cell projection. It is found in the cilium. The protein resides in the nucleus. It localises to the mitochondrion inner membrane. The protein localises to the flagellum. Its function is as follows. Plays a critical role in regulating mitochondrial ultrastructure and function by maintaining the integrity of mitochondrial morphology, particularly the organization of cristae. Preferentially binds to negatively charged phospholipids like cardiolipin and phosphatidylinositol 4,5-bisphosphate enhancing its interaction with mitochondrial membranes. Induces membrane curvature and tubulation, which are critical for maintaining mitochondrial ultrastructure and the organization of cristae. Plays a crucial role in ciliogenesis. May play a role in limb development through its role in ciliogenesis. Plays a key role in the correct positioning of the annulus, a septin-based ring structure in the sperm flagellum, serving both as a physical barrier and a membrane diffusion barrier that separates the midpiece (MP) from the principal piece (PP). This positioning is essential for proper sperm motility and function. Interacts with CBY3 to form a complex which localizes to the curved membrane region of the flagellar pocket. By doing so, may provide stability and rigidity to the periannular membrane to prevent membrane deformation. This function is crucial for halting annulus migration at the proximal end of the fibrous sheath-containing PP. This chain is CBY1-interacting BAR domain-containing protein 1, found in Bos taurus (Bovine).